The following is a 558-amino-acid chain: MSFLVVVPEFLTSAAADVENIGSTLRAANAAAAASTTALAAAGADEVSAAVAALFARFGQEYQAVSAQASAFHQQFVQTLNSASGSYAAAEATIASQLQTAQHDLLGAVNAPTETLLGRPLIGDGAPGTATSPNGGAGGLLYGNGGNGYSATASGVGGGAGGSAGLIGNGGAGGAGGPNAPGGAGGNGGWLLGNGGIGGPGGASSIPGMSGGAGGTGGAAGLLGWGANGGAGGLGDGVGVDRGTGGAGGRGGLLYGGYGVSGPGGDGRTVPLEIIHVTEPTVHANVNGGPTSTILVDTGSAGLVVSPEDVGGILGVLHMGLPTGLSISGYSGGLYYIFATYTTTVDFGNGIVTAPTAVNVVLLSIPTSPFAISTYFSALLADPTTTPFEAYFGAVGVDGVLGVGPNAVGPGPSIPTMALPGDLNQGVLIDAPAGELVFGPNPLPAPNVEVVGSPITTLYVKIDGGTPIPVPSIIDSGGVTGTIPSYVIGSGTLPANTNIEVYTSPGGDRLYAFNTNDYRPTVISSGLMNTGFLPFRFQPVYIDYSPSGIGTTVFDHPA.

The region spanning 1-93 (MSFLVVVPEF…SGSYAAAEAT (93 aa)) is the PE domain. The active site involves Asp297.

It belongs to the mycobacterial PE family. PGRS subfamily. In terms of processing, undergoes auto-proteolytic processing.

It is found in the secreted. The protein localises to the cell surface. Functionally, aspartic protease that processes the lipase LipY and other PE_PGRS proteins. Can also cleave itself. This Mycobacterium tuberculosis (strain CDC 1551 / Oshkosh) protein is PE cleavage protein A.